Here is a 686-residue protein sequence, read N- to C-terminus: Chondroitin synthase (686 aa).

Residues 130–417 (YVWAGKRKEL…LLQQKVPYFY (288 aa)) are galactosaminyltransferase; A1 domain. Residues Pro-157, Arg-161, Asp-188, Tyr-217, Arg-223, and 239–240 (DC) contribute to the UDP-N-acetyl-alpha-D-galactosamine site. Residue Asp-241 coordinates Mn(2+). 361-362 (ED) is a UDP-N-acetyl-alpha-D-galactosamine binding site. His-386 provides a ligand contact to Mn(2+). Residues 418–682 (RKKEKIESAT…ECRKYTWEKI (265 aa)) form a glucuronosyltransferase; A2 domain region. Residues Tyr-441, Asp-469, and 517-520 (QLDS) contribute to the UDP-alpha-D-glucuronate site. Position 521 (Asp-521) interacts with Mn(2+). UDP-alpha-D-glucuronate-binding positions include His-581 and 603 to 604 (AV). His-631 contributes to the Mn(2+) binding site.

Belongs to the glycosyltransferase 2 family. CS/HAS subfamily. Requires Mn(2+) as cofactor.

It catalyses the reaction 3-O-(beta-D-GlcA-(1-&gt;3)-beta-D-GalNAc-(1-&gt;4)-beta-D-GlcA-(1-&gt;3)-beta-D-Gal-(1-&gt;3)-beta-D-Gal-(1-&gt;4)-beta-D-Xyl)-L-seryl-[protein] + UDP-N-acetyl-alpha-D-galactosamine = 3-O-(beta-D-GalNAc-(1-&gt;4)-beta-D-GlcA-(1-&gt;3)-beta-D-GalNAc-(1-&gt;4)-beta-D-GlcA-(1-&gt;3)-beta-D-Gal-(1-&gt;3)-beta-D-Gal-(1-&gt;4)-beta-D-Xyl)-L-seryl-[protein] + UDP + H(+). It carries out the reaction 3-O-{beta-D-GlcA-(1-&gt;3)-[beta-D-GalNAc-(1-&gt;4)-beta-D-GlcA-(1-&gt;3)](n)-beta-D-GalNAc-(1-&gt;4)-beta-D-GlcA-(1-&gt;3)-beta-D-Gal-(1-&gt;3)-beta-D-Gal-(1-&gt;4)-beta-D-Xyl}-L-seryl-[protein] + UDP-N-acetyl-alpha-D-galactosamine = 3-O-{[beta-D-GalNAc-(1-&gt;4)-beta-D-GlcA-(1-&gt;3)](n+1)-beta-D-GalNAc-(1-&gt;4)-beta-D-GlcA-(1-&gt;3)-beta-D-Gal-(1-&gt;3)-beta-D-Gal-(1-&gt;4)-beta-D-Xyl}-L-seryl-[protein] + UDP + H(+). The catalysed reaction is 3-O-(beta-D-GalNAc-(1-&gt;4)-beta-D-GlcA-(1-&gt;3)-beta-D-Gal-(1-&gt;3)-beta-D-Gal-(1-&gt;4)-beta-D-Xyl)-L-seryl-[protein] + UDP-alpha-D-glucuronate = 3-O-(beta-D-GlcA-(1-&gt;3)-beta-D-GalNAc-(1-&gt;4)-beta-D-GlcA-(1-&gt;3)-beta-D-Gal-(1-&gt;3)-beta-D-Gal-(1-&gt;4)-beta-D-Xyl)-L-seryl-[protein] + UDP + H(+). The enzyme catalyses 3-O-{[beta-D-GalNAc-(1-&gt;4)-beta-D-GlcA-(1-&gt;3)](n)-beta-D-GalNAc-(1-&gt;4)-beta-D-GlcA-(1-&gt;3)-beta-D-Gal-(1-&gt;3)-beta-D-Gal-(1-&gt;4)-beta-D-Xyl}-L-seryl-[protein] + UDP-alpha-D-glucuronate = 3-O-{beta-D-GlcA-(1-&gt;3)-[beta-D-GalNAc-(1-&gt;4)-beta-D-GlcA-(1-&gt;3)](n)-beta-D-GalNAc-(1-&gt;4)-beta-D-GlcA-(1-&gt;3)-beta-D-Gal-(1-&gt;3)-beta-D-Gal-(1-&gt;4)-beta-D-Xyl}-L-seryl-[protein] + UDP + H(+). Functionally, glycosyltransferase that catalyzes elongation of chondroitin, a polysaccharide composed of a repeating disaccharide of N-acetylgalactosamine (GalNAc) and glucuronic acid (GlcUA) units, by alternatively transferring the GlcUA and GalNAc moiety from UDP-GlcUA and UDP-GalNAc to the non-reducing ends of the chondroitin chain. Each chondroitin unit has the composition beta-(1-&gt;4)-GlcUA-beta-(1-&gt;3)-GalNAc. The protein is Chondroitin synthase (kfoC) of Escherichia coli.